Reading from the N-terminus, the 750-residue chain is uncharacterized protein (750 aa).

Transmembrane regions (helical) follow at residues 1-21 (MSIISSWLLVSIICLTTSIVT), 465-485 (YGANETGIATFIPGSSIISYL), and 586-606 (GMFGAAIYSWNFEGMSFVAVS).

The protein localises to the membrane. This is an uncharacterized protein from Saccharomyces cerevisiae (strain ATCC 204508 / S288c) (Baker's yeast).